Consider the following 622-residue polypeptide: Phosphoribomutase (622 aa).

Residues T57, R61, 158-159 (SH), and K168 contribute to the substrate site. Residue S158 is the Phosphoserine intermediate of the active site. Position 158 (S158) interacts with Mg(2+). A Phosphoserine modification is found at S158. The Mg(2+) site is built by D325, D327, and D329. Residues 329–330 (DR), T404, 428–430 (EEA), and K442 each bind substrate.

Belongs to the phosphohexose mutase family. It depends on Mg(2+) as a cofactor.

It is found in the cytoplasm. It localises to the nucleus. It catalyses the reaction alpha-D-ribose 1-phosphate = D-ribose 5-phosphate. Its function is as follows. Major phosphoribomutase that converts ribose 1-phosphate to ribose 5-phosphate. Involved in ribose salvage via the pentose phosphate pathway. This Saccharomyces cerevisiae (strain ATCC 204508 / S288c) (Baker's yeast) protein is Phosphoribomutase.